We begin with the raw amino-acid sequence, 90 residues long: Small ribosomal subunit protein uS15 (90 aa).

The protein belongs to the universal ribosomal protein uS15 family. In terms of assembly, part of the 30S ribosomal subunit. Forms a bridge to the 50S subunit in the 70S ribosome, contacting the 23S rRNA.

In terms of biological role, one of the primary rRNA binding proteins, it binds directly to 16S rRNA where it helps nucleate assembly of the platform of the 30S subunit by binding and bridging several RNA helices of the 16S rRNA. Forms an intersubunit bridge (bridge B4) with the 23S rRNA of the 50S subunit in the ribosome. This chain is Small ribosomal subunit protein uS15, found in Helicobacter acinonychis (strain Sheeba).